We begin with the raw amino-acid sequence, 413 residues long: Probable protein phosphatase 2C 78 (413 aa).

Positions 21 to 40 (KKATTTTRRRERSSSQAARR) are disordered. The 299-residue stretch at 111–409 (KYGVASVCGR…DNVSVVVVDL (299 aa)) folds into the PPM-type phosphatase domain. Mn(2+) contacts are provided by Asp-153, Gly-154, Asp-327, and Asp-400.

It belongs to the PP2C family. The cofactor is Mg(2+). Mn(2+) serves as cofactor.

The protein resides in the golgi apparatus. It is found in the nucleus. The catalysed reaction is O-phospho-L-seryl-[protein] + H2O = L-seryl-[protein] + phosphate. It catalyses the reaction O-phospho-L-threonyl-[protein] + H2O = L-threonyl-[protein] + phosphate. Functionally, acts as a negative regulator of abscisic acid (ABA) signaling for stomatal closure in leaves, and controls water loss during leaf senescence. Activated by the NAC029/NAP transcription factor during ABA signaling in senescing leaves. Functions as a negative regulator of osmotic stress and ABA signaling. Acts as a negative regulator of response to drought. The sequence is that of Probable protein phosphatase 2C 78 from Arabidopsis thaliana (Mouse-ear cress).